The primary structure comprises 500 residues: MTLVDVRTPDPKRFIPGATGDWEVIVGMEVHAQVLSNSKLFSGASTEFGKPQNSNVSMVDAAMPGMLPVINEECVKQAVRTGLGLKAQINKRSLFDRKNYFYPDLPQGYQISQFKDPIVGEGKIVISLGPDRQGQFEDIEIGIERLHLEQDAGKSMHDQHATMSYVDLNRSGVALMEIVSKPDMRSSDEAKAYMTKLRSIVRYLGTCDGNMDEGSMRADVNVSVRRPGEDFGTRCEIKNVNSIRFIGQAIEYEARRQIGILEDGGKIDQETRLFDPNKGETRSMRSKEDAHDYRYFPDPDLLPLEFDDAFIKALEADLPELPDDKKERFVRELGLSIYDASVLVSEKAIADYFEAVAAGRDGKTAANWVINDLLGALNRTGKDIEQTPVSPAQLGAIIDLIKAGTISGKIAKDLFEIVLAEGGDPAEIVEARGMKQVTDTGAIEKAVDEIIAANPDQVEKVKAKPTMAAWFVGQVMKATGGKANPQAVQALVKAKLGIEE.

This sequence belongs to the GatB/GatE family. GatB subfamily. As to quaternary structure, heterotrimer of A, B and C subunits.

It carries out the reaction L-glutamyl-tRNA(Gln) + L-glutamine + ATP + H2O = L-glutaminyl-tRNA(Gln) + L-glutamate + ADP + phosphate + H(+). The enzyme catalyses L-aspartyl-tRNA(Asn) + L-glutamine + ATP + H2O = L-asparaginyl-tRNA(Asn) + L-glutamate + ADP + phosphate + 2 H(+). Functionally, allows the formation of correctly charged Asn-tRNA(Asn) or Gln-tRNA(Gln) through the transamidation of misacylated Asp-tRNA(Asn) or Glu-tRNA(Gln) in organisms which lack either or both of asparaginyl-tRNA or glutaminyl-tRNA synthetases. The reaction takes place in the presence of glutamine and ATP through an activated phospho-Asp-tRNA(Asn) or phospho-Glu-tRNA(Gln). This is Aspartyl/glutamyl-tRNA(Asn/Gln) amidotransferase subunit B from Rhizobium johnstonii (strain DSM 114642 / LMG 32736 / 3841) (Rhizobium leguminosarum bv. viciae).